A 395-amino-acid chain; its full sequence is Protein TAMALIN (395 aa).

Residues 1 to 52 (MTLRRLRKLQQKEEAAATPDPAARTPDSEVAPAAPVPTPGPPAAAATPGPPA) are disordered. The segment covering 16 to 33 (AATPDPAARTPDSEVAPA) has biased composition (low complexity). T77 carries the post-translational modification Phosphothreonine. Position 94 is a phosphoserine (S94). Residues 101–190 (VLTLEKEDNQ…VLRLETLYGT (90 aa)) form the PDZ domain. The tract at residues 181–258 (VLRLETLYGT…GAGLLPGSLP (78 aa)) is interaction with PSCD3. The residue at position 237 (Y237) is a Phosphotyrosine. An Omega-N-methylarginine modification is found at R270. A disordered region spans residues 293–349 (SEPPALPPPPPPARAFGPGPAETPAVGPGPGPRAALSRSASVRCAGPGGGGGGGAPG). Positions 296–305 (PALPPPPPPA) are enriched in pro residues. Over residues 338 to 348 (GPGGGGGGGAP) the composition is skewed to gly residues. Residue S387 is modified to Phosphoserine.

In terms of assembly, heteromer. Composed of TAMALIN, CYTH2 and at least one GRM1. Also interacts with CYTH3, GRM2, GRM3 and GRM5.

It is found in the cytoplasm. It localises to the perinuclear region. Its subcellular location is the cell membrane. The protein resides in the postsynaptic cell membrane. Its function is as follows. Plays a role in intracellular trafficking and contributes to the macromolecular organization of group 1 metabotropic glutamate receptors (mGluRs) at synapses. The chain is Protein TAMALIN from Homo sapiens (Human).